We begin with the raw amino-acid sequence, 527 residues long: Catalase (527 aa).

The segment covering 1-22 has biased composition (basic and acidic residues); sequence MSDSRDPASDQMKQWKEQRASQ. The disordered stretch occupies residues 1 to 34; that stretch reads MSDSRDPASDQMKQWKEQRASQRPDVLTTGGGNP. Position 2 is an N-acetylserine (Ser2). A Phosphoserine modification is found at Ser9. Lys13 bears the N6-succinyllysine mark. Position 21 is a phosphoserine (Ser21). Catalysis depends on residues His75 and Asn148. Residues His194, Ser201, Arg203, and Asn213 each coordinate NADP(+). N6-succinyllysine is present on Lys221. Lys233 is modified (N6-acetyllysine). NADP(+)-binding residues include Lys237, Trp303, His305, and Lys306. Lys306 carries the post-translational modification N6-acetyllysine; alternate. An N6-succinyllysine; alternate modification is found at Lys306. Tyr358 provides a ligand contact to heme. Phosphoserine is present on residues Ser417 and Ser422. An N6-acetyllysine; alternate modification is found at Lys430. Residue Lys430 is modified to N6-succinyllysine; alternate. A Phosphoserine modification is found at Ser434. N6-acetyllysine; alternate is present on residues Lys449 and Lys480. N6-succinyllysine; alternate is present on residues Lys449 and Lys480. Lys499 carries the N6-acetyllysine modification. Thr511 bears the Phosphothreonine mark. Ser517 is modified (phosphoserine). N6-succinyllysine is present on Lys522. The short motif at 524–527 is the Microbody targeting signal; atypical element; the sequence is KANL.

The protein belongs to the catalase family. Homotetramer. Interacts (via microbody targeting signal) with PEX5, monomeric form interacts with PEX5, leading to its translocation into peroxisomes. It depends on heme as a cofactor. NADP(+) is required as a cofactor.

The protein resides in the peroxisome matrix. The enzyme catalyses 2 H2O2 = O2 + 2 H2O. Functionally, catalyzes the degradation of hydrogen peroxide (H(2)O(2)) generated by peroxisomal oxidases to water and oxygen, thereby protecting cells from the toxic effects of hydrogen peroxide. Promotes growth of cells including T-cells, B-cells, myeloid leukemia cells, melanoma cells, mastocytoma cells and normal and transformed fibroblast cells. The chain is Catalase (Cat) from Mus musculus (Mouse).